Reading from the N-terminus, the 622-residue chain is Basic helix-loop-helix ARNT-like protein 2 (622 aa).

Residues 1-10 are compositionally biased toward low complexity; sequence MAEAGVGSAE. 2 disordered regions span residues 1–29 and 41–86; these read MAEA…DGNS and PITK…EDEE. Residues 45-54 show a composition bias toward polar residues; the sequence is PATTSFNNSV. Acidic residues predominate over residues 67–76; it reads DNQDTVEVDG. Residues 77-86 show a composition bias toward basic and acidic residues; sequence DPQKRNEDEE. Positions 92–145 constitute a bHLH domain; that stretch reads DFREAHSQTEKRRRDKMNNLIEELSAMIPQCNPMARKLDKLTVLRMAVQHLKSL. 2 PAS domains span residues 163-235 and 342-412; these read KDDE…DVSP and VPQK…LQNK. The 44-residue stretch at 417 to 460 folds into the PAC domain; sequence TNSYKFRAKDGSFITLKSQWFSFMNPWTKELEYIVSNNTVVLGH.

Component of the circadian core oscillator, which includes the CRY proteins, CLOCK, or NPAS2, BMAL1 or BMAL2, CSNK1D and/or CSNK1E, TIMELESS and the PER proteins. Interacts directly with CLOCK to form the BMAL2-CLOCK transactivator. Can form heterodimers or homodimers which interact directly with CLOCK to form the transcription activator. As to expression, expressed in the pineal gland.

The protein localises to the nucleus. Its function is as follows. Transcriptional activator which forms a core component of the circadian clock. The circadian clock, an internal time-keeping system, regulates various physiological processes through the generation of approximately 24 hour circadian rhythms in gene expression, which are translated into rhythms in metabolism and behavior. It is derived from the Latin roots 'circa' (about) and 'diem' (day) and acts as an important regulator of a wide array of physiological functions including metabolism, sleep, body temperature, blood pressure, endocrine, immune, cardiovascular, and renal function. Consists of two major components: the central clock, residing in the suprachiasmatic nucleus (SCN) of the brain, and the peripheral clocks that are present in nearly every tissue and organ system. Both the central and peripheral clocks can be reset by environmental cues, also known as Zeitgebers (German for 'timegivers'). The predominant Zeitgeber for the central clock is light, which is sensed by retina and signals directly to the SCN. The central clock entrains the peripheral clocks through neuronal and hormonal signals, body temperature and feeding-related cues, aligning all clocks with the external light/dark cycle. Circadian rhythms allow an organism to achieve temporal homeostasis with its environment at the molecular level by regulating gene expression to create a peak of protein expression once every 24 hours to control when a particular physiological process is most active with respect to the solar day. Transcription and translation of core clock components (CLOCK, NPAS2, BMAL1, BMAL2, PER1, PER2, PER3, CRY1 and CRY2) plays a critical role in rhythm generation, whereas delays imposed by post-translational modifications (PTMs) are important for determining the period (tau) of the rhythms (tau refers to the period of a rhythm and is the length, in time, of one complete cycle). A diurnal rhythm is synchronized with the day/night cycle, while the ultradian and infradian rhythms have a period shorter and longer than 24 hours, respectively. Disruptions in the circadian rhythms contribute to the pathology of cardiovascular diseases, cancer, metabolic syndromes and aging. A transcription/translation feedback loop (TTFL) forms the core of the molecular circadian clock mechanism. Transcription factors, CLOCK or NPAS2 and BMAL1 or BMAL2, form the positive limb of the feedback loop, act in the form of a heterodimer and activate the transcription of core clock genes and clock-controlled genes (involved in key metabolic processes), harboring E-box elements (5'-CACGTG-3') within their promoters. The core clock genes: PER1/2/3 and CRY1/2 which are transcriptional repressors form the negative limb of the feedback loop and interact with the CLOCK|NPAS2-BMAL1|BMAL2 heterodimer inhibiting its activity and thereby negatively regulating their own expression. This heterodimer also activates nuclear receptors NR1D1/2 and RORA/B/G, which form a second feedback loop and which activate and repress BMAL1 transcription, respectively. The preferred binding motif for the CLOCK-BMAL1 heterodimer is 5'-CACGTGA-3', which contains a flanking adenine nucleotide at the 3-prime end of the canonical 6-nucleotide E-box sequence. CLOCK specifically binds to the half-site 5'-CAC-3', while BMAL1 binds to the half-site 5'-GTGA-3'. This chain is Basic helix-loop-helix ARNT-like protein 2 (BMAL2), found in Gallus gallus (Chicken).